The sequence spans 192 residues: Protein GrpE (192 aa).

The segment covering 1 to 20 has biased composition (basic and acidic residues); that stretch reads MEERNEQVVEEVKEEVKEAQ. The tract at residues 1 to 34 is disordered; sequence MEERNEQVVEEVKEEVKEAQVEEAVTSEDSEETV. Over residues 25 to 34 the composition is skewed to acidic residues; it reads VTSEDSEETV.

This sequence belongs to the GrpE family. As to quaternary structure, homodimer.

Its subcellular location is the cytoplasm. Participates actively in the response to hyperosmotic and heat shock by preventing the aggregation of stress-denatured proteins, in association with DnaK and GrpE. It is the nucleotide exchange factor for DnaK and may function as a thermosensor. Unfolded proteins bind initially to DnaJ; upon interaction with the DnaJ-bound protein, DnaK hydrolyzes its bound ATP, resulting in the formation of a stable complex. GrpE releases ADP from DnaK; ATP binding to DnaK triggers the release of the substrate protein, thus completing the reaction cycle. Several rounds of ATP-dependent interactions between DnaJ, DnaK and GrpE are required for fully efficient folding. This is Protein GrpE from Bacillus cereus (strain AH187).